Reading from the N-terminus, the 426-residue chain is Glutamate-1-semialdehyde 2,1-aminomutase (426 aa).

At K267 the chain carries N6-(pyridoxal phosphate)lysine.

Belongs to the class-III pyridoxal-phosphate-dependent aminotransferase family. HemL subfamily. Homodimer. It depends on pyridoxal 5'-phosphate as a cofactor.

Its subcellular location is the cytoplasm. It carries out the reaction (S)-4-amino-5-oxopentanoate = 5-aminolevulinate. It participates in porphyrin-containing compound metabolism; protoporphyrin-IX biosynthesis; 5-aminolevulinate from L-glutamyl-tRNA(Glu): step 2/2. This is Glutamate-1-semialdehyde 2,1-aminomutase from Bdellovibrio bacteriovorus (strain ATCC 15356 / DSM 50701 / NCIMB 9529 / HD100).